A 635-amino-acid chain; its full sequence is Chaperone protein HtpG (635 aa).

The segment at 1–343 is a; substrate-binding; that stretch reads MSVETQKETL…SNDLSLNVSR (343 aa). A b region spans residues 344-560; sequence EILQKDPIID…EQDMGLQMRQ (217 aa). Residues 561-635 are c; that stretch reads ILEASGQKVP…LNKLLVELSV (75 aa).

It belongs to the heat shock protein 90 family. As to quaternary structure, homodimer.

The protein resides in the cytoplasm. Molecular chaperone. Has ATPase activity. This Pseudomonas syringae pv. tomato (strain ATCC BAA-871 / DC3000) protein is Chaperone protein HtpG.